The primary structure comprises 87 residues: MKTLLLTLVVVTIVCLDLGYTMKCKICNFDTCRAGELKVCASGEKYCFKESWREARGTRIERGCAATCPKGSVYGLYVLCCTTDDCN.

Positions 1-21 are cleaved as a signal peptide; sequence MKTLLLTLVVVTIVCLDLGYT. Intrachain disulfides connect C24-C47, C27-C32, C40-C64, C68-C80, and C81-C86.

As to expression, expressed by the venom gland.

It is found in the secreted. Functionally, binds and inhibits muscular and neuronal nicotinic acetylcholine receptors (nAChR). Is a reversible antagonist of muscle nAChR (alpha-1-beta-1-delta-epsilon/CHRNA1-CHRNB1-CHRND-CHRNE) (IC(50)=10 nM) and a potent and poorly reversible antagonist of the neuronal alpha-7/CHRNA7 nAChR (IC(50)=50 nM). May exhibit differential affinities for the two binding sites on the muscle nAChR. The chain is Candoxin from Bungarus candidus (Malayan krait).